The primary structure comprises 270 residues: Probable feruloyl esterase C (270 aa).

The first 22 residues, 1–22, serve as a signal peptide directing secretion; it reads MAILSRLLTTVTLGSLLTSAVA.

It belongs to the faeC family.

The protein resides in the secreted. The enzyme catalyses feruloyl-polysaccharide + H2O = ferulate + polysaccharide.. Involved in degradation of plant cell walls. Hydrolyzes the feruloyl-arabinose ester bond in arabinoxylans, and the feruloyl-galactose ester bond in pectin. Active against paranitrophenyl-acetate, methyl ferulate and wheat arabinoxylan. The polypeptide is Probable feruloyl esterase C (faeC) (Aspergillus terreus (strain NIH 2624 / FGSC A1156)).